A 422-amino-acid chain; its full sequence is Target of rapamycin complex 2 subunit bit61 (422 aa).

The segment covering 48 to 69 (VTTKESNVGDSDTTENIKSPFN) has biased composition (polar residues). A disordered region spans residues 48–101 (VTTKESNVGDSDTTENIKSPFNGQWPFSRRSSQSSSHPVFEETHWSKHSKRPGK). Phosphoserine occurs at positions 109, 132, and 201.

Belongs to the BIT61 family. As to quaternary structure, the target of rapamycin complex 2 (TORC2) is composed of at least bit61, pop3/wat1, sin1, ste20 and tor1. Either Thr-23, Thr-25 or Ser-26 and Ser-78 or Ser-79 are phosphorylated as well.

The protein resides in the cytoplasm. Its subcellular location is the nucleus. Functionally, component of TORC2, which regulates multiple cellular processes to control cell growth in response to environmental signals. TORC2 is required for cell survival under various stress conditions. TORC2 positively controls G1 cell-cycle arrest, sexual development and amino acid uptake. Positively regulates amino acid uptake through the control of expression of amino acid permeases. The protein is Target of rapamycin complex 2 subunit bit61 of Schizosaccharomyces pombe (strain 972 / ATCC 24843) (Fission yeast).